Here is a 137-residue protein sequence, read N- to C-terminus: Large ribosomal subunit protein uL16 (137 aa).

A disordered region spans residues 1–20 (MLQPKRTKFRKQQKMRNRGL).

The protein belongs to the universal ribosomal protein uL16 family. In terms of assembly, part of the 50S ribosomal subunit.

In terms of biological role, binds 23S rRNA and is also seen to make contacts with the A and possibly P site tRNAs. This Francisella philomiragia subsp. philomiragia (strain ATCC 25017 / CCUG 19701 / FSC 153 / O#319-036) protein is Large ribosomal subunit protein uL16.